Reading from the N-terminus, the 359-residue chain is 2-epi-5-epi-valiolone 7-kinase (359 aa).

A disordered region spans residues 28–48 (GGLGEVHTTPSPGHARRPGAG).

This sequence belongs to the ROK (NagC/XylR) family.

It carries out the reaction 2-epi-5-epi-valiolone + ATP = 2-epi-5-epi-valiolone 7-phosphate + ADP + H(+). In terms of biological role, catalyzes the conversion of 2-epi-5-epi-valiolone to 2-epi-5-epi-valiolone 7-phosphate. Involved in the biosynthesis of the acarviose moiety of the alpha-glucosidase inhibitor acarbose. This is 2-epi-5-epi-valiolone 7-kinase from Actinoplanes sp. (strain ATCC 31044 / CBS 674.73 / SE50/110).